The primary structure comprises 196 residues: Orotate phosphoribosyltransferase (196 aa).

117 to 125 (EDVVTTGLS) serves as a coordination point for 5-phospho-alpha-D-ribose 1-diphosphate. Orotate contacts are provided by threonine 121 and arginine 149.

The protein belongs to the purine/pyrimidine phosphoribosyltransferase family. PyrE subfamily. In terms of assembly, homodimer. It depends on Mg(2+) as a cofactor.

It catalyses the reaction orotidine 5'-phosphate + diphosphate = orotate + 5-phospho-alpha-D-ribose 1-diphosphate. The protein operates within pyrimidine metabolism; UMP biosynthesis via de novo pathway; UMP from orotate: step 1/2. Its function is as follows. Catalyzes the transfer of a ribosyl phosphate group from 5-phosphoribose 1-diphosphate to orotate, leading to the formation of orotidine monophosphate (OMP). In Rhizorhabdus wittichii (strain DSM 6014 / CCUG 31198 / JCM 15750 / NBRC 105917 / EY 4224 / RW1) (Sphingomonas wittichii), this protein is Orotate phosphoribosyltransferase.